Here is a 109-residue protein sequence, read N- to C-terminus: Nucleoid-associated protein Swoo_1794 (109 aa).

A disordered region spans residues 88 to 109 (QKDKMAEVTGGMQLPPGMKMPF).

It belongs to the YbaB/EbfC family. Homodimer.

The protein resides in the cytoplasm. It is found in the nucleoid. Its function is as follows. Binds to DNA and alters its conformation. May be involved in regulation of gene expression, nucleoid organization and DNA protection. This chain is Nucleoid-associated protein Swoo_1794, found in Shewanella woodyi (strain ATCC 51908 / MS32).